The primary structure comprises 354 residues: S-adenosylmethionine:tRNA ribosyltransferase-isomerase (354 aa).

Belongs to the QueA family. In terms of assembly, monomer.

Its subcellular location is the cytoplasm. It catalyses the reaction 7-aminomethyl-7-carbaguanosine(34) in tRNA + S-adenosyl-L-methionine = epoxyqueuosine(34) in tRNA + adenine + L-methionine + 2 H(+). Its pathway is tRNA modification; tRNA-queuosine biosynthesis. Transfers and isomerizes the ribose moiety from AdoMet to the 7-aminomethyl group of 7-deazaguanine (preQ1-tRNA) to give epoxyqueuosine (oQ-tRNA). This chain is S-adenosylmethionine:tRNA ribosyltransferase-isomerase, found in Salmonella paratyphi C (strain RKS4594).